A 519-amino-acid chain; its full sequence is Maturase K (519 aa).

The protein belongs to the intron maturase 2 family. MatK subfamily.

Its subcellular location is the plastid. The protein localises to the chloroplast. Its function is as follows. Usually encoded in the trnK tRNA gene intron. Probably assists in splicing its own and other chloroplast group II introns. The protein is Maturase K of Aesculus pavia (Red buckeye).